A 575-amino-acid polypeptide reads, in one-letter code: Alpha-humulene synthase (575 aa).

Positions 325, 329, 469, and 477 each coordinate Mg(2+). A DDXXD motif motif is present at residues 325–329 (DDLYD).

This sequence belongs to the terpene synthase family. Tpsa subfamily. It depends on Mg(2+) as a cofactor. Requires Mn(2+) as cofactor.

It carries out the reaction (2E,6E)-farnesyl diphosphate = alpha-humulene + diphosphate. The protein operates within sesquiterpene biosynthesis. It participates in terpene metabolism; oleoresin biosynthesis. In terms of biological role, terpene synthase (TPS) involved in the biosynthesis of sesquiterpene natural products included in conifer oleoresin secretions and volatile emissions; these compounds contribute to biotic and abiotic stress defense against herbivores and pathogens. Catalyzes the conversion of (2E,6E)-farnesyl diphosphate (FPP) to (1E,4E,8E)-alpha-humulene. This is Alpha-humulene synthase from Picea glauca (White spruce).